Consider the following 409-residue polypeptide: Tetracenomycin polyketide synthase ketoacyl synthase beta subunit (409 aa).

Residues 4-407 (PAPVVVTGLG…GFNSALVVRR (404 aa)) enclose the Ketosynthase family 3 (KS3) domain.

Belongs to the thiolase-like superfamily. Beta-ketoacyl-ACP synthases family. The tetracenomycin polyketide synthase (TCM PKS) is composed of a ketosynthase complex (TcmKL), an acyl carrier protein (TcmM), a cyclase (TcmN) and a probable second cyclase (TcmJ). TcmK and TcmL form a heterodimeric complex.

It carries out the reaction 10 malonyl-CoA + 8 H(+) = tetracenomycin F2 + 10 CO2 + 10 CoA + 2 H2O. It functions in the pathway antibiotic biosynthesis; tetracenomycin C biosynthesis. Its function is as follows. Involved in the biosynthesis of tetracenomycin C (TCM C). Part of a type II polyketide synthase (PKS) that catalyzes the synthesis of tetracenomycin F2 (TCM F2), a precursor of TCM C, from malonyl-CoA. TcmK and TcmL form a heterodimeric alpha-beta complex that catalyzes the condensation reactions between the growing acyl-enzyme chain and the malonyl-CoA extender units. The sequence is that of Tetracenomycin polyketide synthase ketoacyl synthase beta subunit from Streptomyces glaucescens.